The following is a 342-amino-acid chain: Galactose mutarotase (342 aa).

The residue at position 2 (alanine 2) is an N-acetylalanine. Serine 14 is modified (phosphoserine). Residues 81–82 (NR) and histidine 107 contribute to the beta-D-galactose site. At serine 124 the chain carries Phosphoserine. The active-site Proton donor is histidine 176. Beta-D-galactose-binding positions include 176–178 (HSY), aspartate 243, glutamine 279, and glutamate 307. Glutamate 307 functions as the Proton acceptor in the catalytic mechanism.

Belongs to the aldose epimerase family. Monomer.

It is found in the cytoplasm. It catalyses the reaction alpha-D-galactose = beta-D-galactose. The catalysed reaction is alpha-D-glucose = beta-D-glucose. Its pathway is carbohydrate metabolism; hexose metabolism. The protein operates within carbohydrate metabolism; galactose metabolism. Its function is as follows. Mutarotase that catalyzes the interconversion of beta-D-galactose and alpha-D-galactose during galactose metabolism. Beta-D-galactose is metabolized in the liver into glucose 1-phosphate, the primary metabolic fuel, by the action of four enzymes that constitute the Leloir pathway: GALM, GALK1 (galactokinase), GALT (galactose-1-phosphate uridylyltransferase) and GALE (UDP-galactose-4'-epimerase). Involved in the maintenance of the equilibrium between the beta- and alpha-anomers of galactose, therefore ensuring a sufficient supply of the alpha-anomer for GALK1. Also active on D-glucose although shows a preference for galactose over glucose. The protein is Galactose mutarotase (GALM) of Pongo abelii (Sumatran orangutan).